Consider the following 385-residue polypeptide: Carbamoyl phosphate synthase small chain (385 aa).

The tract at residues 1–196 (MEDALGQLAV…KLEKKKKFLF (196 aa)) is CPSase. L-glutamine-binding residues include Ser51, Gly245, and Gly247. Positions 197–384 (HIVVYDFGVK…IKLLNQVKFS (188 aa)) constitute a Glutamine amidotransferase type-1 domain. Catalysis depends on Cys273, which acts as the Nucleophile. L-glutamine is bound by residues Leu274, Gln277, Asn315, and Phe318. Active-site residues include His357 and Glu359.

The protein belongs to the CarA family. Composed of two chains; the small (or glutamine) chain promotes the hydrolysis of glutamine to ammonia, which is used by the large (or ammonia) chain to synthesize carbamoyl phosphate. Tetramer of heterodimers (alpha,beta)4.

It catalyses the reaction hydrogencarbonate + L-glutamine + 2 ATP + H2O = carbamoyl phosphate + L-glutamate + 2 ADP + phosphate + 2 H(+). The catalysed reaction is L-glutamine + H2O = L-glutamate + NH4(+). Its pathway is amino-acid biosynthesis; L-arginine biosynthesis; carbamoyl phosphate from bicarbonate: step 1/1. It participates in pyrimidine metabolism; UMP biosynthesis via de novo pathway; (S)-dihydroorotate from bicarbonate: step 1/3. Its function is as follows. Small subunit of the glutamine-dependent carbamoyl phosphate synthetase (CPSase). CPSase catalyzes the formation of carbamoyl phosphate from the ammonia moiety of glutamine, carbonate, and phosphate donated by ATP, constituting the first step of 2 biosynthetic pathways, one leading to arginine and/or urea and the other to pyrimidine nucleotides. The small subunit (glutamine amidotransferase) binds and cleaves glutamine to supply the large subunit with the substrate ammonia. The sequence is that of Carbamoyl phosphate synthase small chain from Buchnera aphidicola subsp. Schizaphis graminum (strain Sg).